The primary structure comprises 599 residues: Exocyst complex component EXO70B2 (599 aa).

The tract at residues G38–V58 is disordered.

This sequence belongs to the EXO70 family. In terms of assembly, self interacts. Interacts with EXO70B1. Interacts with the exocyst subunits EXO70H1, SEC5A and SEC15B. Binds to SNAP33. Subunit of the exocyst complex that mediates vesicle tethering during exocytosis. Binds to PUB22. In terms of processing, target of the E3 ubiquitin-protein ligase PUB22 that mediates its ubiquitination and degradation via the 26S proteasome to attenuate pathogen-associated molecular patterns (PAMP)-induced signaling, especially is response to the bacterial elicitor flg22. Mostly expressed in leaves and, to a lower extent, in roots, cotyledons, internodes, flower buds, siliques and anthers.

Its subcellular location is the cytoplasmic vesicle. It is found in the phagosome. The protein localises to the cytoplasm. It localises to the nucleus. Component of an exocyst subcomplex specifically involved in autophagy-related, Golgi-independent membrane traffic to the vacuole. Regulates autophagosome formation and autophagy-related Golgi-independent import into the vacuole. Positive regulator of defense responses to pathogenic bacteria (e.g. P.syringae pv. maculicola), to the biotrophic oomycete H.arabidopsidis and to fungi (e.g. B.graminis hordei), especially in cell wall apposition formation related to plant defense. Required for both immediate and later responses triggered by pathogen-associated molecular patterns (PAMPs). Positive regulator of abscisic acid (ABA)-independent mannitol (drought)-promoted stomatal closure. The sequence is that of Exocyst complex component EXO70B2 from Arabidopsis thaliana (Mouse-ear cress).